The primary structure comprises 903 residues: Protein U7 (903 aa).

A helical transmembrane segment spans residues 665–685 (KALLTFLTNIVFIVFVVNTLY).

This sequence belongs to the herpesviridae US22 family.

It is found in the host membrane. This is Protein U7 (U7) from Human herpesvirus 6B (strain Z29) (HHV-6 variant B).